The primary structure comprises 278 residues: Sulfur carrier protein FdhD (278 aa).

Cysteine 121 functions as the Cysteine persulfide intermediate in the catalytic mechanism. 260–265 (FCKPGR) provides a ligand contact to Mo-bis(molybdopterin guanine dinucleotide).

It belongs to the FdhD family.

It localises to the cytoplasm. In terms of biological role, required for formate dehydrogenase (FDH) activity. Acts as a sulfur carrier protein that transfers sulfur from IscS to the molybdenum cofactor prior to its insertion into FDH. This chain is Sulfur carrier protein FdhD, found in Salmonella typhi.